We begin with the raw amino-acid sequence, 253 residues long: MILNTFNLQGKVALITGCDTGLGQGMAVGLAEAGCDIVGVNIVEPKETIEKVTAVGRRFLSLTADMSDISGHAALVEKAVAEFGKVDILVNNAGIIRREDAIEFSEKNWDDVMNLNIKSVFFMSQTVARQFIKQGHGGKIINIASMLSFQGGIRVPSYTASKSAVMGITRLLANEWAKHNINVNAIAPGYMATNNTQQLRADQDRSKEILDRIPAGRWGLPQDLQGPAVFLASSASDYVNGYTIAVDGGWLAR.

14-38 (LITGCDTGLGQGMAVGLAEAGCDIV) lines the NAD(+) pocket. Ser145 is a substrate binding site. The Proton acceptor role is filled by Tyr158.

Belongs to the short-chain dehydrogenases/reductases (SDR) family.

The catalysed reaction is 2-dehydro-3-deoxy-D-gluconate + NAD(+) = 3-deoxy-D-glycero-2,5-hexodiulosonate + NADH + H(+). The protein operates within glycan metabolism; pectin degradation; 2-dehydro-3-deoxy-D-gluconate from pectin: step 5/5. In terms of biological role, catalyzes the reduction of 2,5-diketo-3-deoxygluconate (DKII or 4,6-dihydroxy-2,5-dioxohexanoate) into 2-keto-3-deoxygluconate (KDG or 2-dehydro-3-deoxygluconate) with a concomitant oxidation of NADH. The polypeptide is 2-dehydro-3-deoxy-D-gluconate 5-dehydrogenase (kduD) (Dickeya dadantii (strain 3937) (Erwinia chrysanthemi (strain 3937))).